The sequence spans 181 residues: ATP-dependent protease subunit HslV (181 aa).

Thr-7 is a catalytic residue. 3 residues coordinate Na(+): Ala-162, Cys-165, and Thr-168.

It belongs to the peptidase T1B family. HslV subfamily. A double ring-shaped homohexamer of HslV is capped on each side by a ring-shaped HslU homohexamer. The assembly of the HslU/HslV complex is dependent on binding of ATP.

The protein resides in the cytoplasm. The catalysed reaction is ATP-dependent cleavage of peptide bonds with broad specificity.. Allosterically activated by HslU binding. Functionally, protease subunit of a proteasome-like degradation complex believed to be a general protein degrading machinery. The chain is ATP-dependent protease subunit HslV from Coxiella burnetii (strain RSA 493 / Nine Mile phase I).